Consider the following 180-residue polypeptide: Lipid droplet coating protein Cap20 (180 aa).

The protein belongs to the perilipin family. As to quaternary structure, interacts with class I hydrophobin Hydr1. Interacts also with the cAMP-dependent protein kinase catalytic subunit PkaC1.

Its subcellular location is the lipid droplet. In terms of biological role, lipid droplet coating protein that regulates lipid metabolism, appressorial turgor pressure, and virulence. Mature appressoria with high turgor pressure are essential to penetrate the leaf surface. The sequence is that of Lipid droplet coating protein Cap20 from Colletotrichum siamense (Anthracnose fungus).